The chain runs to 173 residues: MTYFVLFLGLCFVLGGLAVASNPSPYYGVVGLVLASVAGCGWFLSLGASFVSLVLFMVYLGGMLVVFVYSVSLAADPFPEAWGDWQVIGYGMGFAMVLVVGVVIGGFVESWNFGVVTVDSVGMFSVRLDFSGVAMFYSWGAGMFLVAGWGLLLTLFVVLELVRGLSRGAIRAV.

Helical transmembrane passes span 1–21 (MTYF…AVAS), 27–47 (YGVV…LSLG), 48–68 (ASFV…VVFV), 87–107 (VIGY…IGGF), and 139–159 (WGAG…FVVL).

Belongs to the complex I subunit 6 family.

Its subcellular location is the mitochondrion membrane. It carries out the reaction a ubiquinone + NADH + 5 H(+)(in) = a ubiquinol + NAD(+) + 4 H(+)(out). Its function is as follows. Core subunit of the mitochondrial membrane respiratory chain NADH dehydrogenase (Complex I) that is believed to belong to the minimal assembly required for catalysis. Complex I functions in the transfer of electrons from NADH to the respiratory chain. The immediate electron acceptor for the enzyme is believed to be ubiquinone. This is NADH-ubiquinone oxidoreductase chain 6 (MT-ND6) from Brachyramphus brevirostris (Kittlitz's murrelet).